Here is a 244-residue protein sequence, read N- to C-terminus: 14-3-3 protein homolog 1 (244 aa).

Belongs to the 14-3-3 family.

This Echinococcus granulosus (Hydatid tapeworm) protein is 14-3-3 protein homolog 1.